A 249-amino-acid chain; its full sequence is DNA repair protein RecO (249 aa).

It belongs to the RecO family.

In terms of biological role, involved in DNA repair and RecF pathway recombination. This is DNA repair protein RecO from Rhodopseudomonas palustris (strain BisB5).